The chain runs to 82 residues: UPF0213 protein MW0443 (82 aa).

Residues 2 to 77 (DSHFVYIVKC…KTYTRQKKLR (76 aa)) enclose the GIY-YIG domain.

It belongs to the UPF0213 family.

In Staphylococcus aureus (strain MW2), this protein is UPF0213 protein MW0443.